We begin with the raw amino-acid sequence, 185 residues long: Elongation factor P (185 aa).

The protein belongs to the elongation factor P family.

It localises to the cytoplasm. It functions in the pathway protein biosynthesis; polypeptide chain elongation. Its function is as follows. Involved in peptide bond synthesis. Stimulates efficient translation and peptide-bond synthesis on native or reconstituted 70S ribosomes in vitro. Probably functions indirectly by altering the affinity of the ribosome for aminoacyl-tRNA, thus increasing their reactivity as acceptors for peptidyl transferase. In Gloeothece citriformis (strain PCC 7424) (Cyanothece sp. (strain PCC 7424)), this protein is Elongation factor P.